Here is a 655-residue protein sequence, read N- to C-terminus: Protein npp-24 (655 aa).

Residues 263-283 (ICSVFVLVSGGGVLSHLVVFP) form a helical membrane-spanning segment.

The protein localises to the membrane. The sequence is that of Protein npp-24 from Caenorhabditis elegans.